The following is a 430-amino-acid chain: Adenylosuccinate synthetase (430 aa).

Residues 12-18 (GDEGKGK) and 40-42 (GHT) each bind GTP. Asp-13 serves as the catalytic Proton acceptor. Mg(2+)-binding residues include Asp-13 and Gly-40. IMP contacts are provided by residues 13-16 (DEGK), 38-41 (NAGH), Thr-128, Arg-142, Gln-223, Thr-238, and Arg-302. His-41 (proton donor) is an active-site residue. 298 to 304 (TTTGRPR) contacts substrate. GTP-binding positions include Arg-304, 330-332 (SID), and 412-414 (SVG).

This sequence belongs to the adenylosuccinate synthetase family. Homodimer. Mg(2+) is required as a cofactor.

Its subcellular location is the cytoplasm. The enzyme catalyses IMP + L-aspartate + GTP = N(6)-(1,2-dicarboxyethyl)-AMP + GDP + phosphate + 2 H(+). The protein operates within purine metabolism; AMP biosynthesis via de novo pathway; AMP from IMP: step 1/2. Plays an important role in the de novo pathway of purine nucleotide biosynthesis. Catalyzes the first committed step in the biosynthesis of AMP from IMP. In Streptococcus pyogenes serotype M5 (strain Manfredo), this protein is Adenylosuccinate synthetase.